A 457-amino-acid polypeptide reads, in one-letter code: Protein PIN-LIKES 2 (457 aa).

Topologically, residues 1–15 are lumenal; that stretch reads MSGFSSGNVNSRVVD. The chain crosses the membrane as a helical span at residues 16–36; that stretch reads ILSGVVPLLKLICLTVIGLLL. The Cytoplasmic segment spans residues 37–54; sequence AHPKTQLVPRATFRLLSK. A helical membrane pass occupies residues 55–75; sequence LVFALFLPCLIFTELGESITL. Residues 76-85 lie on the Lumenal side of the membrane; that stretch reads DNIVQWWFIP. A helical transmembrane segment spans residues 86 to 106; sequence VNVLLSAVVGSLIGYLVVLIC. Over 107–116 the chain is Cytoplasmic; it reads RPPPEFNRFT. Residues 117 to 137 form a helical membrane-spanning segment; sequence IVMTAFGNTGNLLLAIVSSVC. Residues 138–151 lie on the Lumenal side of the membrane; it reads HTKTNPFGPNCNSR. A helical membrane pass occupies residues 152–172; the sequence is GVSYVSFAQWVAVILVYTVVY. Residues 173-291 lie on the Cytoplasmic side of the membrane; it reads HMMEPPLEYY…PVKHILQPPT (119 aa). A helical transmembrane segment spans residues 292 to 312; it reads IASLLAIIIGSVPQLKSVVFG. Over 313-322 the chain is Lumenal; the sequence is YDAPLSFITD. The helical transmembrane segment at 323 to 343 threads the bilayer; that stretch reads SLNIMGSAMVPSVMLVLGGML. Topologically, residues 344 to 356 are cytoplasmic; it reads SEGPNESTLGLRT. Residues 357-377 form a helical membrane-spanning segment; the sequence is TIGISVARLLVLPLVGIGIVM. Over 378-393 the chain is Lumenal; it reads SADKLGLISSADPMFK. A helical membrane pass occupies residues 394–414; sequence FVLLLQYSTPSAILLGAIASL. Topologically, residues 415–424 are cytoplasmic; it reads RGYAVREASA. The helical transmembrane segment at 425-445 threads the bilayer; that stretch reads LLFWQHIFALLSLTFYIVIFF. At 446–457 the chain is on the lumenal side; sequence KLTVETTVQGMQ.

It belongs to the auxin efflux carrier (TC 2.A.69.2) family. As to expression, expressed in seedlings, rosette and cauline leaves, flowers and siliques.

The protein localises to the endoplasmic reticulum membrane. Functionally, involved in cellular auxin homeostasis by regulating auxin metabolism. Regulates intracellular auxin accumulation at the endoplasmic reticulum and thus auxin availability for nuclear auxin signaling. The polypeptide is Protein PIN-LIKES 2 (Arabidopsis thaliana (Mouse-ear cress)).